A 272-amino-acid polypeptide reads, in one-letter code: IMGHMVNSLAQIDEFVGLGSNSIETDVSFDKQANPEYTYHGIPCDCGRSCGHSTKFNDFLKGLRKATTPGDSKYHEKLILVVFDLKTGSLYDNQAYDAGTKLAKNLLQHYWNNGNNGGRAYIILSIPKLNHYKLITGFKETLKNEGHGDLLEKVGHGFSGNDDISEVQKTYNKAGVTGHVWQSDGITNCLLRGLSRVKAAVANRDSGSGIINKVYYWTVDKRSTTRDSLDAKVDGIMTNYPDITVEILNEDAYKKKFRIATYEDNPWETFKE.

The active site involves His-4. The Mg(2+) site is built by Glu-24 and Asp-26. His-40 (nucleophile) is an active-site residue. Disulfide bonds link Cys-44-Cys-50 and Cys-46-Cys-189. A Mg(2+)-binding site is contributed by Asp-84.

This sequence belongs to the arthropod phospholipase D family. Class II subfamily. It depends on Mg(2+) as a cofactor. In terms of tissue distribution, expressed by the venom gland.

It is found in the secreted. The enzyme catalyses an N-(acyl)-sphingosylphosphocholine = an N-(acyl)-sphingosyl-1,3-cyclic phosphate + choline. It catalyses the reaction an N-(acyl)-sphingosylphosphoethanolamine = an N-(acyl)-sphingosyl-1,3-cyclic phosphate + ethanolamine. The catalysed reaction is a 1-acyl-sn-glycero-3-phosphocholine = a 1-acyl-sn-glycero-2,3-cyclic phosphate + choline. It carries out the reaction a 1-acyl-sn-glycero-3-phosphoethanolamine = a 1-acyl-sn-glycero-2,3-cyclic phosphate + ethanolamine. Dermonecrotic toxins cleave the phosphodiester linkage between the phosphate and headgroup of certain phospholipids (sphingolipid and lysolipid substrates), forming an alcohol (often choline) and a cyclic phosphate. This toxin acts on sphingomyelin (SM). It may also act on ceramide phosphoethanolamine (CPE), lysophosphatidylcholine (LPC) and lysophosphatidylethanolamine (LPE), but not on lysophosphatidylserine (LPS), and lysophosphatidylglycerol (LPG). It acts by transphosphatidylation, releasing exclusively cyclic phosphate products as second products. Induces dermonecrosis, hemolysis, increased vascular permeability, edema, inflammatory response, and platelet aggregation. The chain is Dermonecrotic toxin LvSicTox-alphaIC1aiii from Loxosceles variegata (Recluse spider).